The sequence spans 258 residues: 5-oxoprolinase subunit A 2 (258 aa).

It belongs to the LamB/PxpA family. Forms a complex composed of PxpA, PxpB and PxpC.

The enzyme catalyses 5-oxo-L-proline + ATP + 2 H2O = L-glutamate + ADP + phosphate + H(+). In terms of biological role, catalyzes the cleavage of 5-oxoproline to form L-glutamate coupled to the hydrolysis of ATP to ADP and inorganic phosphate. The protein is 5-oxoprolinase subunit A 2 of Pseudomonas putida (strain ATCC 47054 / DSM 6125 / CFBP 8728 / NCIMB 11950 / KT2440).